Here is a 392-residue protein sequence, read N- to C-terminus: S-adenosylmethionine synthase (392 aa).

ATP is bound at residue His20. Asp22 contacts Mg(2+). Glu48 contacts K(+). L-methionine-binding residues include Glu61 and Gln106. The tract at residues 106–116 is flexible loop; the sequence is QSQDIINAIKK. ATP-binding positions include 171–173, Asp248, 254–255, Ala271, and Lys275; these read DSK and RK. An L-methionine-binding site is contributed by Asp248. Position 279 (Lys279) interacts with L-methionine.

The protein belongs to the AdoMet synthase family. In terms of assembly, homotetramer; dimer of dimers. The cofactor is Mg(2+). It depends on K(+) as a cofactor.

It is found in the cytoplasm. It carries out the reaction L-methionine + ATP + H2O = S-adenosyl-L-methionine + phosphate + diphosphate. It participates in amino-acid biosynthesis; S-adenosyl-L-methionine biosynthesis; S-adenosyl-L-methionine from L-methionine: step 1/1. In terms of biological role, catalyzes the formation of S-adenosylmethionine (AdoMet) from methionine and ATP. The overall synthetic reaction is composed of two sequential steps, AdoMet formation and the subsequent tripolyphosphate hydrolysis which occurs prior to release of AdoMet from the enzyme. The chain is S-adenosylmethionine synthase from Borrelia garinii subsp. bavariensis (strain ATCC BAA-2496 / DSM 23469 / PBi) (Borreliella bavariensis).